Here is a 128-residue protein sequence, read N- to C-terminus: NADH dehydrogenase [ubiquinone] 1 beta subcomplex subunit 6 (128 aa).

Ser2 carries the N-acetylserine modification. Lys24 carries the N6-acetyllysine modification. A helical membrane pass occupies residues 64–86 (TYRHSIFAFTHVLIPVWIIHYYL).

The protein belongs to the complex I NDUFB6 subunit family. As to quaternary structure, complex I is composed of 45 different subunits.

It localises to the mitochondrion inner membrane. Its function is as follows. Accessory subunit of the mitochondrial membrane respiratory chain NADH dehydrogenase (Complex I), that is believed not to be involved in catalysis. Complex I functions in the transfer of electrons from NADH to the respiratory chain. The immediate electron acceptor for the enzyme is believed to be ubiquinone. This chain is NADH dehydrogenase [ubiquinone] 1 beta subcomplex subunit 6 (NDUFB6), found in Bos taurus (Bovine).